Reading from the N-terminus, the 172-residue chain is Sec-independent protein translocase protein TatB (172 aa).

Residues 1-21 (MIDLGISKLALIGAVALVVIG) traverse the membrane as a helical segment. Positions 97–129 (GDPASRQTATQAAEWRPAPAKSRNGRNSWRNKQ) are disordered.

Belongs to the TatB family. The Tat system comprises two distinct complexes: a TatABC complex, containing multiple copies of TatA, TatB and TatC subunits, and a separate TatA complex, containing only TatA subunits. Substrates initially bind to the TatABC complex, which probably triggers association of the separate TatA complex to form the active translocon.

It is found in the cell inner membrane. Part of the twin-arginine translocation (Tat) system that transports large folded proteins containing a characteristic twin-arginine motif in their signal peptide across membranes. Together with TatC, TatB is part of a receptor directly interacting with Tat signal peptides. TatB may form an oligomeric binding site that transiently accommodates folded Tat precursor proteins before their translocation. This is Sec-independent protein translocase protein TatB from Ralstonia nicotianae (strain ATCC BAA-1114 / GMI1000) (Ralstonia solanacearum).